The following is a 306-amino-acid chain: Porphobilinogen deaminase (306 aa).

Cys239 is subject to S-(dipyrrolylmethanemethyl)cysteine.

Belongs to the HMBS family. Monomer. Dipyrromethane is required as a cofactor.

It carries out the reaction 4 porphobilinogen + H2O = hydroxymethylbilane + 4 NH4(+). It functions in the pathway porphyrin-containing compound metabolism; protoporphyrin-IX biosynthesis; coproporphyrinogen-III from 5-aminolevulinate: step 2/4. Its function is as follows. Tetrapolymerization of the monopyrrole PBG into the hydroxymethylbilane pre-uroporphyrinogen in several discrete steps. The chain is Porphobilinogen deaminase (hemC) from Helicobacter pylori (strain ATCC 700392 / 26695) (Campylobacter pylori).